We begin with the raw amino-acid sequence, 316 residues long: Tyrosine--tRNA ligase 2 (316 aa).

The L-tyrosine site is built by tyrosine 26, tyrosine 146, glutamine 150, aspartate 153, and glutamine 168. Positions 219-223 (KMSKS) match the 'KMSKS' region motif. Lysine 222 is a binding site for ATP.

This sequence belongs to the class-I aminoacyl-tRNA synthetase family. TyrS type 4 subfamily. Homodimer.

Its subcellular location is the cytoplasm. The catalysed reaction is tRNA(Tyr) + L-tyrosine + ATP = L-tyrosyl-tRNA(Tyr) + AMP + diphosphate + H(+). In terms of biological role, catalyzes the attachment of tyrosine to tRNA(Tyr) in a two-step reaction: tyrosine is first activated by ATP to form Tyr-AMP and then transferred to the acceptor end of tRNA(Tyr). This chain is Tyrosine--tRNA ligase 2, found in Pyrobaculum aerophilum (strain ATCC 51768 / DSM 7523 / JCM 9630 / CIP 104966 / NBRC 100827 / IM2).